The chain runs to 163 residues: NADH-quinone oxidoreductase subunit I (163 aa).

2 4Fe-4S ferredoxin-type domains span residues 53–83 (LRRYPNGEERCIACKLCEAICPAQAITIEAG) and 94–123 (VRYDIDMVKCIYCGFCQEACPVDAIVEGPN). Cysteine 63, cysteine 66, cysteine 69, cysteine 73, cysteine 103, cysteine 106, cysteine 109, and cysteine 113 together coordinate [4Fe-4S] cluster.

This sequence belongs to the complex I 23 kDa subunit family. NDH-1 is composed of 14 different subunits. Subunits NuoA, H, J, K, L, M, N constitute the membrane sector of the complex. [4Fe-4S] cluster serves as cofactor.

The protein localises to the cell inner membrane. The enzyme catalyses a quinone + NADH + 5 H(+)(in) = a quinol + NAD(+) + 4 H(+)(out). In terms of biological role, NDH-1 shuttles electrons from NADH, via FMN and iron-sulfur (Fe-S) centers, to quinones in the respiratory chain. The immediate electron acceptor for the enzyme in this species is believed to be ubiquinone. Couples the redox reaction to proton translocation (for every two electrons transferred, four hydrogen ions are translocated across the cytoplasmic membrane), and thus conserves the redox energy in a proton gradient. This chain is NADH-quinone oxidoreductase subunit I, found in Brucella suis (strain ATCC 23445 / NCTC 10510).